The chain runs to 146 residues: Large ribosomal subunit protein uL15 (146 aa).

The segment covering 1–13 (MKLHELKPSEGSR) has biased composition (basic and acidic residues). The disordered stretch occupies residues 1-54 (MKLHELKPSEGSRKVRNRVGRGIGSGNGKTAGKGHKGQNARSGGGVRPGFEGGQ). Gly residues-rich tracts occupy residues 21-31 (RGIGSGNGKTA) and 42-52 (SGGGVRPGFEG).

This sequence belongs to the universal ribosomal protein uL15 family. In terms of assembly, part of the 50S ribosomal subunit.

In terms of biological role, binds to the 23S rRNA. The polypeptide is Large ribosomal subunit protein uL15 (Bacillus velezensis (strain DSM 23117 / BGSC 10A6 / LMG 26770 / FZB42) (Bacillus amyloliquefaciens subsp. plantarum)).